The sequence spans 237 residues: Protein-S-isoprenylcysteine O-methyltransferase (237 aa).

The next 4 helical transmembrane spans lie at 26 to 46 (SSAI…LFIF), 53 to 73 (FGIY…WVTM), 92 to 112 (FNMA…FFPS), and 116 to 136 (FSLW…RSVA). S-adenosyl-L-methionine contacts are provided by residues glutamine 149, 156–159 (HVLV), tyrosine 164, and 169–172 (HPSY). Residues 184–204 (VILMNPISIIGFGWASWSFFS) traverse the membrane as a helical segment. Arginine 206 serves as a coordination point for substrate. Glutamate 210 provides a ligand contact to S-adenosyl-L-methionine.

It belongs to the class VI-like SAM-binding methyltransferase superfamily. Isoprenylcysteine carboxyl methyltransferase family.

It is found in the endoplasmic reticulum membrane. It carries out the reaction [protein]-C-terminal S-[(2E,6E)-farnesyl]-L-cysteine + S-adenosyl-L-methionine = [protein]-C-terminal S-[(2E,6E)-farnesyl]-L-cysteine methyl ester + S-adenosyl-L-homocysteine. Methylates the C-terminal cysteine residues of small GTPases and the heterotrimeric G protein gamma subunit in response to cAMP. The methylation is required for intercellular signaling and regulation of cAMP waves propagation. It also seems to induce the activity of car1, a G protein-coupled receptor which senses extracellular cAMP during the aggregation phase of development. The sequence is that of Protein-S-isoprenylcysteine O-methyltransferase (icmt-1) from Dictyostelium discoideum (Social amoeba).